The chain runs to 312 residues: Ornithine carbamoyltransferase (312 aa).

Residues 59-62, glutamine 86, arginine 110, and 137-140 each bind carbamoyl phosphate; these read STRT and HPCQ. L-ornithine is bound by residues asparagine 167, aspartate 231, and 235-236; that span reads SM. 2 residues coordinate carbamoyl phosphate: cysteine 271 and arginine 299.

The protein belongs to the aspartate/ornithine carbamoyltransferase superfamily. OTCase family.

Its subcellular location is the cytoplasm. The catalysed reaction is carbamoyl phosphate + L-ornithine = L-citrulline + phosphate + H(+). It functions in the pathway amino-acid biosynthesis; L-arginine biosynthesis; L-arginine from L-ornithine and carbamoyl phosphate: step 1/3. Reversibly catalyzes the transfer of the carbamoyl group from carbamoyl phosphate (CP) to the N(epsilon) atom of ornithine (ORN) to produce L-citrulline. This Methanopyrus kandleri (strain AV19 / DSM 6324 / JCM 9639 / NBRC 100938) protein is Ornithine carbamoyltransferase.